The primary structure comprises 378 residues: tRNA-specific 2-thiouridylase MnmA (378 aa).

ATP-binding positions include 27 to 34 (AMSGGVDS) and L53. Catalysis depends on C121, which acts as the Nucleophile. A disulfide bridge links C121 with C218. Position 145 (G145) interacts with ATP. Residues 168 to 170 (RDQ) are interaction with tRNA. C218 functions as the Cysteine persulfide intermediate in the catalytic mechanism.

Belongs to the MnmA/TRMU family.

It is found in the cytoplasm. It carries out the reaction S-sulfanyl-L-cysteinyl-[protein] + uridine(34) in tRNA + AH2 + ATP = 2-thiouridine(34) in tRNA + L-cysteinyl-[protein] + A + AMP + diphosphate + H(+). In terms of biological role, catalyzes the 2-thiolation of uridine at the wobble position (U34) of tRNA, leading to the formation of s(2)U34. The sequence is that of tRNA-specific 2-thiouridylase MnmA from Rhizorhabdus wittichii (strain DSM 6014 / CCUG 31198 / JCM 15750 / NBRC 105917 / EY 4224 / RW1) (Sphingomonas wittichii).